Reading from the N-terminus, the 240-residue chain is Uridylate kinase (240 aa).

An ATP-binding site is contributed by 12 to 15 (KLSG). Residues 20-25 (GDQGKG) form an involved in allosteric activation by GTP region. Residue G54 coordinates UMP. Positions 55 and 59 each coordinate ATP. UMP contacts are provided by residues D74 and 135–142 (TGSPYFST). Residues N163, Y169, and D172 each coordinate ATP.

It belongs to the UMP kinase family. Homohexamer.

It is found in the cytoplasm. The catalysed reaction is UMP + ATP = UDP + ADP. It participates in pyrimidine metabolism; CTP biosynthesis via de novo pathway; UDP from UMP (UMPK route): step 1/1. With respect to regulation, allosterically activated by GTP. Inhibited by UTP. Its function is as follows. Catalyzes the reversible phosphorylation of UMP to UDP. This chain is Uridylate kinase, found in Ligilactobacillus salivarius (strain UCC118) (Lactobacillus salivarius).